The following is a 177-amino-acid chain: Small ribosomal subunit protein uS4 (177 aa).

One can recognise an S4 RNA-binding domain in the interval 104-168 (RRLQTLVFRK…SPMASESHPE (65 aa)). The interval 157 to 177 (PNSPMASESHPERTDSVKDAE) is disordered. Over residues 165–177 (SHPERTDSVKDAE) the composition is skewed to basic and acidic residues.

The protein belongs to the universal ribosomal protein uS4 family. As to quaternary structure, part of the 30S ribosomal subunit. Contacts protein S5. The interaction surface between S4 and S5 is involved in control of translational fidelity.

Functionally, one of the primary rRNA binding proteins, it binds directly to 16S rRNA where it nucleates assembly of the body of the 30S subunit. With S5 and S12 plays an important role in translational accuracy. In Methanococcus aeolicus (strain ATCC BAA-1280 / DSM 17508 / OCM 812 / Nankai-3), this protein is Small ribosomal subunit protein uS4.